The following is a 241-amino-acid chain: NAD(P)H-hydrate epimerase (241 aa).

The region spanning 11 to 221 (AASLDKDLME…SIVEKYGLNC (211 aa)) is the YjeF N-terminal domain. Residue 65–69 (NNGGD) participates in (6S)-NADPHX binding. K(+) is bound by residues asparagine 66 and aspartate 127. Residues 131 to 137 (GFSFGGP) and aspartate 160 contribute to the (6S)-NADPHX site. Residue serine 163 coordinates K(+).

Belongs to the NnrE/AIBP family. It depends on K(+) as a cofactor.

It is found in the cytoplasm. The protein resides in the mitochondrion. It carries out the reaction (6R)-NADHX = (6S)-NADHX. The catalysed reaction is (6R)-NADPHX = (6S)-NADPHX. In terms of biological role, catalyzes the epimerization of the S- and R-forms of NAD(P)HX, a damaged form of NAD(P)H that is a result of enzymatic or heat-dependent hydration. This is a prerequisite for the S-specific NAD(P)H-hydrate dehydratase to allow the repair of both epimers of NAD(P)HX. The polypeptide is NAD(P)H-hydrate epimerase (Aspergillus fumigatus (strain ATCC MYA-4609 / CBS 101355 / FGSC A1100 / Af293) (Neosartorya fumigata)).